Here is a 369-residue protein sequence, read N- to C-terminus: Pyruvate dehydrogenase E1 component subunit alpha (369 aa).

As to quaternary structure, heterodimer of an alpha and a beta chain. It depends on thiamine diphosphate as a cofactor.

The enzyme catalyses N(6)-[(R)-lipoyl]-L-lysyl-[protein] + pyruvate + H(+) = N(6)-[(R)-S(8)-acetyldihydrolipoyl]-L-lysyl-[protein] + CO2. Functionally, the pyruvate dehydrogenase complex catalyzes the overall conversion of pyruvate to acetyl-CoA and CO(2). It contains multiple copies of three enzymatic components: pyruvate dehydrogenase (E1), dihydrolipoamide acetyltransferase (E2) and lipoamide dehydrogenase (E3). In Geobacillus stearothermophilus (Bacillus stearothermophilus), this protein is Pyruvate dehydrogenase E1 component subunit alpha (pdhA).